Consider the following 215-residue polypeptide: Chymomexicain (215 aa).

Intrachain disulfides connect cysteine 22/cysteine 63, cysteine 56/cysteine 96, and cysteine 154/cysteine 201. Cysteine 25 is a catalytic residue. Active-site residues include histidine 160 and asparagine 176.

This sequence belongs to the peptidase C1 family.

In terms of biological role, cysteine protease. This is Chymomexicain from Jacaratia mexicana (Wild papaya).